The primary structure comprises 124 residues: MISSLLQVALGGALGASARYLTNVGSMRLFGPAFPVGTMIVNVVGSFLMGVLVVVLAHKGNRYAPFLMTGMLGGFTTFSAFSLDAVTLYERGQAGLAAAYVGLSVGLSLAGLMAGMAAVRGWMA.

The next 3 membrane-spanning stretches (helical) occupy residues 36 to 56 (VGTM…VVVL), 63 to 83 (YAPF…AFSL), and 99 to 119 (AYVG…MAAV). 2 residues coordinate Na(+): Gly73 and Thr76.

The protein belongs to the fluoride channel Fluc/FEX (TC 1.A.43) family.

The protein resides in the cell inner membrane. It carries out the reaction fluoride(in) = fluoride(out). With respect to regulation, na(+) is not transported, but it plays an essential structural role and its presence is essential for fluoride channel function. Fluoride-specific ion channel. Important for reducing fluoride concentration in the cell, thus reducing its toxicity. This is Fluoride-specific ion channel FluC from Cereibacter sphaeroides (strain ATCC 17029 / ATH 2.4.9) (Rhodobacter sphaeroides).